Here is a 269-residue protein sequence, read N- to C-terminus: Extracellular metalloprotease UREG_07765 (269 aa).

An N-terminal signal peptide occupies residues 1–18 (MRLSVSLLALAFGSLVAA). N-linked (GlcNAc...) asparagine glycosylation occurs at Asn179. His191 is a Zn(2+) binding site. Glu192 is an active-site residue. His195 lines the Zn(2+) pocket. Residues 207–227 (VSDTPPQRSSTQGCPSSRDSC) are disordered. Residues 210–225 (TPPQRSSTQGCPSSRD) show a composition bias toward polar residues. An intrachain disulfide couples Cys220 to Cys246.

This sequence belongs to the peptidase M43B family.

It localises to the secreted. In terms of biological role, secreted metalloproteinase that allows assimilation of proteinaceous substrates. The polypeptide is Extracellular metalloprotease UREG_07765 (Uncinocarpus reesii (strain UAMH 1704)).